The primary structure comprises 406 residues: Tryptophan synthase beta chain (406 aa).

K99 is modified (N6-(pyridoxal phosphate)lysine).

It belongs to the TrpB family. In terms of assembly, tetramer of two alpha and two beta chains. Pyridoxal 5'-phosphate serves as cofactor.

The enzyme catalyses (1S,2R)-1-C-(indol-3-yl)glycerol 3-phosphate + L-serine = D-glyceraldehyde 3-phosphate + L-tryptophan + H2O. Its pathway is amino-acid biosynthesis; L-tryptophan biosynthesis; L-tryptophan from chorismate: step 5/5. In terms of biological role, the beta subunit is responsible for the synthesis of L-tryptophan from indole and L-serine. The sequence is that of Tryptophan synthase beta chain from Phenylobacterium zucineum (strain HLK1).